A 1037-amino-acid polypeptide reads, in one-letter code: MWAGGVGSPRRGMAPAPTDDLFARKLRQPARPPLTPNTFEPRPARGPLLRSGSDAGEVRPPTPASPRARAHSHEDASRPAATPTRLFTDPLALLGLPAEEPEPTFPPVLEPRWFAHYDVQSLLFDWAPRPRGTGSHTEANSGTLAEGQTTTSDLLLGAPGFVSELGGEGELGLGGPISPPVPPALPNAAVSVLEEPQTRTTTYSLEHADLGAGYYRKYFYGKEHQNFFGLDEALGPVAVSLRREEKEGSGGGTLHSYRVIVRTTQLRTLRGTISEDALPPGPPSVSPRKLLEHVAPRLSPTCLRLGSASPKVPRQLLTLDEQVLSFQRKGGILYCRAGQGSEEEMYNNQEAGAAFMQFLTLLGDVVRLKGFESYRAQLDTKTDSTGTHSLYTTYQDHEIMFHVSTMLPYTPNNQQQLLRKRHIGNDIVTIVFQEPGSKPFCPTTIRSHFQHVFLVVRAHAPCTPHTSYRVAVSRTQDTPAFGPALPEGGGPFAANADFRAFLLAKALNGEQAAGHARQFHAMATRTRQQYLQDLATNEVTTTSLDSASRFGLPSLGGRRRATPRSPGADVQAAGALMWGVRAAPGARVAAGAETSGPDDAEVPCLLGISAETLVLVAPRDGRVVFNCACRDVLAWTFSEHQLDLYHGRGEAITLRLDGAPGQAVGEVVARLQLVSRGCETRELALPRDGQGRLGFEVDAEGFITHVERFTFAETTGLRPGARLLRVCGQTLPKLGPETAAQMLRSAPKVCVTVLPPDESGRPRRSFSELYMLSLKEPSRRGGPEPVQDETGKLVILPPTKQLLHFCLKDSSSPPGPGDLTEERTEFLRTHNSLSSGSSLSDEAPVLPNTTPDLLLVTTANPSAPGTDRETPPSQDQSGSPSSHEDTSDSGPELRASILPRTLSLRNSISKIMSEAGSETLEDEWQSISEIASTCNTILESLSREGQPISESGDPKEALKCDSEPEPGSLSEKVSHLESMLWKLQEDLQREKADRAALEEEVRSLRHNNQRLLAESESAATRLLLASKHLGAPTTDLA.

The tract at residues 1–85 is disordered; it reads MWAGGVGSPR…ASRPAATPTR (85 aa). Threonine 62 bears the Phosphothreonine mark. Phosphoserine is present on residues serine 65, serine 178, serine 299, and serine 309. The 219-residue stretch at 316–534 folds into the Rap-GAP domain; the sequence is LLTLDEQVLS…RTRQQYLQDL (219 aa). The 77-residue stretch at 682-758 folds into the PDZ domain; sequence ELALPRDGQG…VCVTVLPPDE (77 aa). A phosphoserine mark is found at serine 812 and serine 834. Disordered stretches follow at residues 830–849 and 855–898; these read HNSL…LPNT and LVTT…ASIL. Positions 871–881 are enriched in low complexity; it reads PPSQDQSGSPS. Serine 907 is modified (phosphoserine). Residues 943 to 969 are disordered; it reads REGQPISESGDPKEALKCDSEPEPGSL. The span at 952–962 shows a compositional bias: basic and acidic residues; it reads GDPKEALKCDS. Residues 968-1025 adopt a coiled-coil conformation; the sequence is SLSEKVSHLESMLWKLQEDLQREKADRAALEEEVRSLRHNNQRLLAESESAATRLLLA.

In terms of assembly, interacts with RRP1B; the interaction leads to inhibition of SIPA1 GTPase activity. Preferentially expressed in both fetal and adult lymphohematopoietic tissues.

The protein resides in the nucleus. It localises to the cytoplasm. The protein localises to the perinuclear region. Its subcellular location is the endomembrane system. GTPase activator for the nuclear Ras-related regulatory proteins Rap1, Rsr1 and Ran in vitro, converting them to the putatively inactive GDP-bound state. Affects cell cycle progression. The polypeptide is Signal-induced proliferation-associated protein 1 (Sipa1) (Mus musculus (Mouse)).